Consider the following 105-residue polypeptide: Cell division protein FtsL (105 aa).

At Met-1–Lys-24 the chain is on the cytoplasmic side. Residues Ala-25–Gln-45 traverse the membrane as a helical segment. Residues Thr-46–Glu-105 are Extracellular-facing.

It belongs to the FtsL family.

The protein resides in the cell membrane. Functionally, essential cell division protein. The protein is Cell division protein FtsL of Streptococcus pneumoniae (strain ATCC BAA-255 / R6).